A 700-amino-acid polypeptide reads, in one-letter code: Calpain-2 catalytic subunit (700 aa).

Ala2 is subject to N-acetylalanine. The propeptide at 2–19 is anchors to the small subunit; that stretch reads AGIAIKLAKDREAAEGLG. Residues 45-344 form the Calpain catalytic domain; the sequence is LFQDPSFPAL…YSRLEICNLT (300 aa). Positions 89, 91, and 96 each coordinate Ca(2+). Cys105 is an active-site residue. Glu175, Gln229, and Lys230 together coordinate Ca(2+). Residues His262 and Asn286 contribute to the active site. 4 residues coordinate Ca(2+): Glu292, Asp299, Gln319, and Glu323. A domain III region spans residues 345-514; sequence PDTLTCDSYK…KKADYQAVDD (170 aa). Positions 515-529 are linker; sequence EIEANIEEIDANEED. The interval 530 to 700 is domain IV; the sequence is IDDGFRRLFV…LASWLSFSVL (171 aa). Ca(2+) is bound by residues Ala542, Asp545, Glu547, Glu552, Asp585, Asp587, Ser589, Lys591, Glu596, Asp615, Asp617, Ser619, Thr621, Glu626, Asp658, and Asn661. EF-hand domains follow at residues 572-605 and 602-637; these read FSIE…TKIQ and TKIQ…AGFK.

Belongs to the peptidase C2 family. As to quaternary structure, forms a heterodimer with a small (regulatory) subunit (CAPNS1). Interacts with CPEB3; this leads to cleavage of CPEB3. The cofactor is Ca(2+). Ubiquitous.

It is found in the cytoplasm. It localises to the cell membrane. The enzyme catalyses Broad endopeptidase specificity.. Activated by 200-1000 micromolar concentrations of calcium and inhibited by calpastatin. In terms of biological role, calcium-regulated non-lysosomal thiol-protease which catalyzes limited proteolysis of substrates involved in cytoskeletal remodeling and signal transduction. Proteolytically cleaves MYOC at 'Arg-226'. Proteolytically cleaves CPEB3 following neuronal stimulation which abolishes CPEB3 translational repressor activity, leading to translation of CPEB3 target mRNAs. This Mus musculus (Mouse) protein is Calpain-2 catalytic subunit (Capn2).